Consider the following 722-residue polypeptide: Mating-type switching protein swi2 (722 aa).

2 disordered regions span residues 1 to 35 (MNVNKKQESIPVNTGSESISSNDNERFEQGKGVGS) and 301 to 342 (SEEF…PLPS). The span at 9 to 22 (SIPVNTGSESISSN) shows a compositional bias: polar residues. A compositionally biased stretch (acidic residues) spans 302 to 316 (EEFDFEPSREDEDFP). Residues 319–332 (TSDSTGQDPLSSEP) are compositionally biased toward polar residues.

Interacts with swi5 and rhp51.

Required for normal mating-type switching. This Schizosaccharomyces pombe (strain 972 / ATCC 24843) (Fission yeast) protein is Mating-type switching protein swi2 (swi2).